Reading from the N-terminus, the 86-residue chain is RNA-binding protein Hfq (86 aa).

A Sm domain is found at 9–69 (DRFLNILRTS…VSTIMPESFV (61 aa)).

This sequence belongs to the Hfq family. As to quaternary structure, homohexamer.

In terms of biological role, RNA chaperone that binds small regulatory RNA (sRNAs) and mRNAs to facilitate mRNA translational regulation in response to envelope stress, environmental stress and changes in metabolite concentrations. Also binds with high specificity to tRNAs. This is RNA-binding protein Hfq from Thermosipho melanesiensis (strain DSM 12029 / CIP 104789 / BI429).